The primary structure comprises 445 residues: UNC93-like protein MFSD11 (445 aa).

Residues 8 to 28 (LLNIIILGIGFMFMFTAFQTS) form a helical membrane-spanning segment. A glycan (N-linked (GlcNAc...) asparagine) is linked at asparagine 40. The next 4 helical transmembrane spans lie at 53-73 (AIIYSVFSASNLIAPSIVAVI), 74-94 (GCQMSMFLSGLLYSAYIAMFI), 98-118 (TWSFYTLSVLIGIAAAVLWTA), and 138-158 (IFWALLQFSMLFGNLFIYLAW). N-linked (GlcNAc...) asparagine glycosylation occurs at asparagine 163. Helical transmembrane passes span 170 to 190 (RTVFIALTVISLVGSVLFFLI), 239 to 259 (MLLLSILVAYTGLELTFYSGV), 277 to 297 (LIGLSGIFVGLGEVLGGGLFG), 309 to 329 (PVVILGVVVHFLAFYMIYLYM), 345 to 365 (AFINPSKTIALACSFLLGLGD), 385 to 405 (APAFAVFKFVQSVSAAVAFFY), and 415 to 435 (LLILVIFGFFGTISFFFVEWG).

It belongs to the unc-93 family.

The protein resides in the membrane. The protein is UNC93-like protein MFSD11 (mfsd11) of Xenopus tropicalis (Western clawed frog).